The primary structure comprises 642 residues: MDNSNGIHYIELTPNPIRFDAVSQLTNVFFDDSNKQIFAVRSGGATGVVVKGPGSPDDVVISFCMSDRGGAIRSIKFSPDNQILAVQRKENSVEFICFQGDQPLLQDIITHQVKTLIHGFVWVHNREVALISNTGVEVYTVVPEKRQVRSVKSLSIGIKWFAWCCDANVALLCTSEGNSLIPVLVKQKVITKLPKVDLGNPSRDVQESKVTLGQVYGVLAVLILQSNSTTGLMEVEVHLLNGPGLAPRKCHVLRLSLLGRFAINTVDNLIVVHHQASGTSLLFDISLPGEVINEITYHTPITPGRSIKPFGLKLPSLSPDGQILQCELYSTHWVLFQPNIVIDAKLGCMWFLNLCIEPLCQLISDRIRLTEFLLQRSNGKQMLLKVIGQLVDDQYKGTLLPVLETIFSRINKIYASWVQLELQNQTAQPSNVKTTTLKQSTPPIVLIEQLDMVQIFQRIARRPYTESILMLYLQSLNKFNIAAQEELSKMIISELISNRSFDTLRRLVSYSMLLESKSVACFLLSHSNVDTAISQVAIDMLGRIEAHEIIIEVMLGQGKVIDALRLAKNSMGLEKVPARKFLEAAHKTKDDLIFHSVYRFFQMRNLKLYETLSFPKAEQCTEFIQHYNNTFPADNPTRQPVS.

The Mic1 domain occupies 462–616 (RPYTESILML…KLYETLSFPK (155 aa)).

Belongs to the RMC1 family. As to quaternary structure, component of the Mon1-Ccz1 guanyl-nucleotide exchange factor complex made up of Mon1, Ccz1 and Bulli; the interaction of Bulli with the Mon1-Ccz1 heterodimer is mediated via the C-terminal Mic1 domain of Bulli. Mon1 and Ccz1 form a stable complex which displays Rab7 GEF activity with or without Bulli; GEF activity is enhanced by Bulli possibly by improving membrane association of the complex.

Its subcellular location is the late endosome. In terms of biological role, positive regulator of the Rab7 guanyl-nucleotide exchange activity of the Mon1-Ccz1 complex, possibly by enhancing its endosomal membrane association. As part of the Mon1-Ccz1 complex involved in endolysosomal biogenesis possibly by mediating Rab conversion, the replacement of Rab5 with Rab7 during late endosome maturation. The protein is Regulator of MON1-CCZ1 complex of Drosophila melanogaster (Fruit fly).